A 627-amino-acid polypeptide reads, in one-letter code: Pheromone B alpha 2 receptor (627 aa).

Topologically, residues 1-7 (MLDPTYP) are extracellular. The helical transmembrane segment at 8-28 (AFPIFAFLGIVCCLVPLPWHL) threads the bilayer. The Cytoplasmic segment spans residues 29 to 35 (QSWNSGT). A helical transmembrane segment spans residues 36–56 (CFLMIWTAVACLNMFVNSIIW). At 57 to 69 (KDHAQNVAPVWCE) the chain is on the extracellular side. The helical transmembrane segment at 70–90 (ISIRITLGASVGIPASSLCIV) threads the bilayer. Residues 91–102 (RRLYSIAKKFRA) are Cytoplasmic-facing. Residues 103 to 123 (VMVDALICVLFPILYIILQIV) form a helical membrane-spanning segment. Residues 124 to 150 (VQGHRFNILENIGCFPAIINTPLTYPL) are Extracellular-facing. A helical transmembrane segment spans residues 151–171 (TFMWPVLIGVISFIYSTLALI). At 172–197 (QFNRHRLQFTQFLHSNSTLSVSRYLR) the chain is on the cytoplasmic side. A helical transmembrane segment spans residues 198–218 (LMALAMTEMMCTTPMGVFVII). The Extracellular portion of the chain corresponds to 219-260 (LNAKATPVSPYVSWAVTHYGYGRIDQVPAIIWRSNRLLVASY). A helical transmembrane segment spans residues 261-281 (ELTRWSSPAIALIFFFYFGFA). Residues 282–627 (QEARRNYAAA…ASPRTHRASV (346 aa)) are Cytoplasmic-facing. Disordered regions lie at residues 363-405 (LPRP…SSPI), 479-505 (TVPQ…SSSA), and 518-627 (LPST…RASV). The span at 372–387 (SSSGFSSSDSTRFGSS) shows a compositional bias: low complexity. Composition is skewed to polar residues over residues 519 to 533 (PSTT…SLPT) and 545 to 555 (SLSQLFGISSM). A compositionally biased stretch (low complexity) spans 569–607 (ATGTASPTTTAPAPASTTIAPASATMAPATTTTAPTTIA).

The protein belongs to the G-protein coupled receptor 4 family.

It is found in the cell membrane. Functionally, receptor for the BAP2 pheromone, a prenylated mating factor. The receptor/pheromone interaction may have a role in the fusion of clamp cells. In Schizophyllum commune (Split gill fungus), this protein is Pheromone B alpha 2 receptor (BAR2).